The sequence spans 164 residues: Succinate dehydrogenase assembly factor 2, mitochondrial (164 aa).

Residues 1-27 constitute a mitochondrion transit peptide; sequence MAVVTLIPTLARVLSKHSLLSPLLSVT.

This sequence belongs to the SDHAF2 family. As to quaternary structure, interacts with SDHA within the SDH catalytic dimer.

The protein resides in the mitochondrion matrix. Its function is as follows. Plays an essential role in the assembly of succinate dehydrogenase (SDH), an enzyme complex (also referred to as respiratory complex II) that is a component of both the tricarboxylic acid (TCA) cycle and the mitochondrial electron transport chain, and which couples the oxidation of succinate to fumarate with the reduction of ubiquinone (coenzyme Q) to ubiquinol. Required for flavinylation (covalent attachment of FAD) of the flavoprotein subunit SDHA of the SDH catalytic dimer. This chain is Succinate dehydrogenase assembly factor 2, mitochondrial, found in Rattus norvegicus (Rat).